Reading from the N-terminus, the 118-residue chain is Small ribosomal subunit protein uS13 (118 aa).

Positions 94 to 118 are disordered; it reads GLPVRGQRTKTNARTRKGPRKPIKK.

This sequence belongs to the universal ribosomal protein uS13 family. As to quaternary structure, part of the 30S ribosomal subunit. Forms a loose heterodimer with protein S19. Forms two bridges to the 50S subunit in the 70S ribosome.

Located at the top of the head of the 30S subunit, it contacts several helices of the 16S rRNA. In the 70S ribosome it contacts the 23S rRNA (bridge B1a) and protein L5 of the 50S subunit (bridge B1b), connecting the 2 subunits; these bridges are implicated in subunit movement. Contacts the tRNAs in the A and P-sites. The protein is Small ribosomal subunit protein uS13 of Salmonella paratyphi A (strain ATCC 9150 / SARB42).